A 259-amino-acid polypeptide reads, in one-letter code: MAVISMKQLLEAGVHFGHQTRRWNPKMAKYIFTERNGIHVIDLQQTVKYADQAYDFMRDAAANDAVVLFVGTKKQAADAVAEEAVRSGQYFINHRWLGGTLTNWGTIQKRIARLKEIKRMEEDGTFEVLPKKEVALLNKQRARLEKFLGGIEDMPRIPDVMYVVDPHKEQIAVKEAKKLGIPVVAMVDTNTDPDDIDVIIPANDDAIRAVKLITAKLADAIIEGRQGDDAVAVEAEFAASETQADSIEEIVEVVEGDNA.

It belongs to the universal ribosomal protein uS2 family.

This is Small ribosomal subunit protein uS2 from Streptococcus pneumoniae (strain Hungary19A-6).